Here is a 539-residue protein sequence, read N- to C-terminus: Protein Wnt-4 (539 aa).

Positions 1 to 21 (MPSPTGVFVLMILTHLSFGLG) are cleaved as a signal peptide. The tract at residues 34 to 77 (QNGDLDSSNPAIHHQQHQQHQQHQQHQQHQSNHNLNNGNMNSTI) is disordered. Over residues 51–74 (QQHQQHQQHQQHQSNHNLNNGNMN) the composition is skewed to low complexity. N-linked (GlcNAc...) asparagine glycans are attached at residues asparagine 74 and asparagine 284. Cystine bridges form between cysteine 274–cysteine 285, cysteine 322–cysteine 330, cysteine 332–cysteine 349, cysteine 397–cysteine 411, and cysteine 399–cysteine 406. Serine 403 carries O-palmitoleoyl serine; by PORCN lipidation. N-linked (GlcNAc...) asparagine glycosylation occurs at asparagine 419. Residues 436–463 (APNQRSMRQVSSSRMKKPKQRRKKPQQS) form a disordered region. Residues 439–448 (QRSMRQVSSS) show a composition bias toward low complexity. A compositionally biased stretch (basic residues) spans 449 to 460 (RMKKPKQRRKKP). Intrachain disulfides connect cysteine 478-cysteine 497, cysteine 486-cysteine 492, cysteine 496-cysteine 538, cysteine 512-cysteine 529, cysteine 514-cysteine 526, and cysteine 521-cysteine 522.

Belongs to the Wnt family. In terms of processing, palmitoleoylated by porcupine. The lipid group functions as a sorting signal, targeting the ligand to polarized vesicles that transport Wnt4 to unique sites at the cell surface. Depalmitoleoylated by notum, leading to inhibit Wnt signaling pathway.

It localises to the secreted. It is found in the extracellular space. Its subcellular location is the extracellular matrix. Binds as a ligand to a family of frizzled seven-transmembrane receptors and acts through a cascade of genes on the nucleus. Acts downstream of homeotic complex genes in the visceral mesoderm and is required for embryonic segmentation. Also required for cell movement and FAK regulation during ovarian morphogenesis. This chain is Protein Wnt-4 (Wnt4), found in Drosophila melanogaster (Fruit fly).